Here is a 90-residue protein sequence, read N- to C-terminus: Putative membrane protein insertion efficiency factor (90 aa).

The disordered stretch occupies residues 68–90 (VPAHFSLRRNPQYKEEDHRGKKR). Over residues 79 to 90 (QYKEEDHRGKKR) the composition is skewed to basic and acidic residues.

Belongs to the UPF0161 family.

Its subcellular location is the cell membrane. Its function is as follows. Could be involved in insertion of integral membrane proteins into the membrane. The polypeptide is Putative membrane protein insertion efficiency factor (Lactiplantibacillus plantarum (strain ATCC BAA-793 / NCIMB 8826 / WCFS1) (Lactobacillus plantarum)).